Reading from the N-terminus, the 95-residue chain is Co-chaperonin GroES (95 aa).

The protein belongs to the GroES chaperonin family. In terms of assembly, heptamer of 7 subunits arranged in a ring. Interacts with the chaperonin GroEL.

Its subcellular location is the cytoplasm. Its function is as follows. Together with the chaperonin GroEL, plays an essential role in assisting protein folding. The GroEL-GroES system forms a nano-cage that allows encapsulation of the non-native substrate proteins and provides a physical environment optimized to promote and accelerate protein folding. GroES binds to the apical surface of the GroEL ring, thereby capping the opening of the GroEL channel. This Streptococcus uberis (strain ATCC BAA-854 / 0140J) protein is Co-chaperonin GroES.